The sequence spans 65 residues: Small ribosomal subunit protein eS31 (65 aa).

Zn(2+)-binding residues include C36, C39, C55, and C58. The C4-type zinc finger occupies 36–58 (CPKCGSVMAFHKEPVPRWHCGKC).

Belongs to the eukaryotic ribosomal protein eS31 family. In terms of assembly, part of the 30S ribosomal subunit. Zn(2+) is required as a cofactor.

The protein is Small ribosomal subunit protein eS31 of Pyrobaculum aerophilum (strain ATCC 51768 / DSM 7523 / JCM 9630 / CIP 104966 / NBRC 100827 / IM2).